A 576-amino-acid polypeptide reads, in one-letter code: Arginine--tRNA ligase (576 aa).

The short motif at 122–132 is the 'HIGH' region element; sequence PNVAKQMHVGH.

It belongs to the class-I aminoacyl-tRNA synthetase family. Monomer.

It localises to the cytoplasm. The catalysed reaction is tRNA(Arg) + L-arginine + ATP = L-arginyl-tRNA(Arg) + AMP + diphosphate. The polypeptide is Arginine--tRNA ligase (Photorhabdus laumondii subsp. laumondii (strain DSM 15139 / CIP 105565 / TT01) (Photorhabdus luminescens subsp. laumondii)).